The chain runs to 147 residues: Large ribosomal subunit protein uL13 (147 aa).

Belongs to the universal ribosomal protein uL13 family. Part of the 50S ribosomal subunit.

In terms of biological role, this protein is one of the early assembly proteins of the 50S ribosomal subunit, although it is not seen to bind rRNA by itself. It is important during the early stages of 50S assembly. This is Large ribosomal subunit protein uL13 from Mycobacteroides abscessus (strain ATCC 19977 / DSM 44196 / CCUG 20993 / CIP 104536 / JCM 13569 / NCTC 13031 / TMC 1543 / L948) (Mycobacterium abscessus).